The primary structure comprises 242 residues: UDP-2,3-diacylglucosamine hydrolase (242 aa).

Residues aspartate 9, histidine 11, aspartate 42, asparagine 79, and histidine 114 each coordinate Mn(2+). Asparagine 79–arginine 80 contributes to the substrate binding site. Substrate contacts are provided by aspartate 122, serine 160, asparagine 164, lysine 167, and histidine 195. Positions 195 and 197 each coordinate Mn(2+).

Belongs to the LpxH family. Mn(2+) serves as cofactor.

Its subcellular location is the cell inner membrane. The enzyme catalyses UDP-2-N,3-O-bis[(3R)-3-hydroxytetradecanoyl]-alpha-D-glucosamine + H2O = 2-N,3-O-bis[(3R)-3-hydroxytetradecanoyl]-alpha-D-glucosaminyl 1-phosphate + UMP + 2 H(+). It participates in glycolipid biosynthesis; lipid IV(A) biosynthesis; lipid IV(A) from (3R)-3-hydroxytetradecanoyl-[acyl-carrier-protein] and UDP-N-acetyl-alpha-D-glucosamine: step 4/6. Its function is as follows. Hydrolyzes the pyrophosphate bond of UDP-2,3-diacylglucosamine to yield 2,3-diacylglucosamine 1-phosphate (lipid X) and UMP by catalyzing the attack of water at the alpha-P atom. Involved in the biosynthesis of lipid A, a phosphorylated glycolipid that anchors the lipopolysaccharide to the outer membrane of the cell. This is UDP-2,3-diacylglucosamine hydrolase from Shewanella loihica (strain ATCC BAA-1088 / PV-4).